The following is a 329-amino-acid chain: Sex comb on midleg-like protein 1 (329 aa).

Phosphoserine occurs at positions 138 and 238. Residues 138–157 (SPTLPVSRRENNSPSNLPRP) form a disordered region. The region spanning 258–325 (WSVEAVVLFL…YYIDRLKQGK (68 aa)) is the SAM domain.

It belongs to the SCM family.

The protein resides in the nucleus. In terms of biological role, putative Polycomb group (PcG) protein. PcG proteins act by forming multiprotein complexes, which are required to maintain the transcriptionally repressive state of homeotic genes throughout development. May be involved in spermatogenesis during sexual maturation. The sequence is that of Sex comb on midleg-like protein 1 (SCML1) from Gorilla gorilla gorilla (Western lowland gorilla).